A 444-amino-acid polypeptide reads, in one-letter code: Homogentisate 1,2-dioxygenase (444 aa).

The disordered stretch occupies residues 92–111 (GDSADVPPTPPNQLRWDPLP). Histidine 298 functions as the Proton acceptor in the catalytic mechanism. Histidine 341 and glutamate 347 together coordinate Fe cation. Homogentisate contacts are provided by tyrosine 356 and histidine 377. Histidine 377 contacts Fe cation.

It belongs to the homogentisate dioxygenase family. In terms of assembly, hexamer; dimer of trimers. Requires Fe cation as cofactor.

It carries out the reaction homogentisate + O2 = 4-maleylacetoacetate + H(+). It functions in the pathway amino-acid degradation; L-phenylalanine degradation; acetoacetate and fumarate from L-phenylalanine: step 4/6. Its function is as follows. Involved in the catabolism of homogentisate (2,5-dihydroxyphenylacetate or 2,5-OH-PhAc), a central intermediate in the degradation of phenylalanine and tyrosine. Catalyzes the oxidative ring cleavage of the aromatic ring of homogentisate to yield maleylacetoacetate. The chain is Homogentisate 1,2-dioxygenase from Burkholderia vietnamiensis (strain G4 / LMG 22486) (Burkholderia cepacia (strain R1808)).